A 194-amino-acid chain; its full sequence is Probable DNA-directed RNA polymerase subunit delta (194 aa).

Positions 14–83 constitute an HTH HARE-type domain; it reads LSMIEVARAI…GENKWGLRSW (70 aa). The segment at 117 to 194 is disordered; it reads GDEDAIDYSD…SDDEEDEEGE (78 aa).

This sequence belongs to the RpoE family. RNAP is composed of a core of 2 alpha, a beta and a beta' subunits. The core is associated with a delta subunit and one of several sigma factors.

Functionally, participates in both the initiation and recycling phases of transcription. In the presence of the delta subunit, RNAP displays an increased specificity of transcription, a decreased affinity for nucleic acids, and an increased efficiency of RNA synthesis because of enhanced recycling. This Streptococcus mutans serotype c (strain ATCC 700610 / UA159) protein is Probable DNA-directed RNA polymerase subunit delta.